A 327-amino-acid polypeptide reads, in one-letter code: Phosphoenolpyruvate transferase (327 aa).

7,8-didemethyl-8-hydroxy-5-deazariboflavin is bound at residue D59.

Belongs to the CofD family. In terms of assembly, homodimer. The cofactor is Mg(2+).

It carries out the reaction enolpyruvoyl-2-diphospho-5'-guanosine + 7,8-didemethyl-8-hydroxy-5-deazariboflavin = dehydro coenzyme F420-0 + GMP + H(+). Its pathway is cofactor biosynthesis; coenzyme F420 biosynthesis. In terms of biological role, catalyzes the transfer of the phosphoenolpyruvate moiety from enoylpyruvoyl-2-diphospho-5'-guanosine (EPPG) to 7,8-didemethyl-8-hydroxy-5-deazariboflavin (FO) with the formation of dehydro coenzyme F420-0 and GMP. In Mycolicibacterium smegmatis (strain ATCC 700084 / mc(2)155) (Mycobacterium smegmatis), this protein is Phosphoenolpyruvate transferase.